Here is a 602-residue protein sequence, read N- to C-terminus: NAD-reducing hydrogenase HoxS subunit alpha (602 aa).

An NAD(+)-binding site is contributed by 219 to 228; it reads GRGGAGFSTG. Residue 332–379 coordinates FMN; it reads GAGAYICGDESALIESCEGKRGTPRVKPPFPVQQGYLGKPTSVNNVET. The [4Fe-4S] cluster site is built by Cys-499, Cys-502, Cys-505, and Cys-545.

It belongs to the complex I 51 kDa subunit family. In terms of assembly, tetramer of an alpha and a gamma subunits (flavin-containing dimer), and a delta and a nickel-containing beta subunit (hydrogenase dimer). Requires FMN as cofactor. It depends on [4Fe-4S] cluster as a cofactor.

The protein resides in the cytoplasm. The enzyme catalyses H2 + NAD(+) = NADH + H(+). Functionally, subunits alpha and gamma of HoxS constitute an NADH--oxidoreductase. The chain is NAD-reducing hydrogenase HoxS subunit alpha (hoxF) from Cupriavidus necator (strain ATCC 17699 / DSM 428 / KCTC 22496 / NCIMB 10442 / H16 / Stanier 337) (Ralstonia eutropha).